Reading from the N-terminus, the 321-residue chain is Probable arabinan endo-1,5-alpha-L-arabinosidase C (321 aa).

The signal sequence occupies residues 1-18; sequence MYLYTLILLFLASANVNA. Asp33 acts as the Proton acceptor in catalysis. Asn192 carries an N-linked (GlcNAc...) asparagine glycan. Residue Glu200 is the Proton donor of the active site. N-linked (GlcNAc...) asparagine glycosylation is present at Asn224.

It belongs to the glycosyl hydrolase 43 family.

It localises to the secreted. The enzyme catalyses Endohydrolysis of (1-&gt;5)-alpha-arabinofuranosidic linkages in (1-&gt;5)-arabinans.. It participates in glycan metabolism; L-arabinan degradation. Its function is as follows. Endo-1,5-alpha-L-arabinanase involved in degradation of pectin. Its preferred substrate is linear 1,5-alpha-L-arabinan. This Aspergillus fumigatus (strain CBS 144.89 / FGSC A1163 / CEA10) (Neosartorya fumigata) protein is Probable arabinan endo-1,5-alpha-L-arabinosidase C (abnC).